A 312-amino-acid polypeptide reads, in one-letter code: Cell division control protein 2 homolog D (312 aa).

The 291-residue stretch at 14–304 (FVKLEKVGEG…AKKAMEHPYF (291 aa)) folds into the Protein kinase domain. Residues 20–28 (VGEGTYGKV) and Lys43 each bind ATP. The residue at position 24 (Thr24) is a Phosphothreonine. Tyr25 bears the Phosphotyrosine mark. Residue Asp145 is the Proton acceptor of the active site. Residue Thr179 is modified to Phosphothreonine; by CAK.

It belongs to the protein kinase superfamily. CMGC Ser/Thr protein kinase family. CDC2/CDKX subfamily.

The enzyme catalyses L-seryl-[protein] + ATP = O-phospho-L-seryl-[protein] + ADP + H(+). The catalysed reaction is L-threonyl-[protein] + ATP = O-phospho-L-threonyl-[protein] + ADP + H(+). It catalyses the reaction [DNA-directed RNA polymerase] + ATP = phospho-[DNA-directed RNA polymerase] + ADP + H(+). Functionally, plays a key role in the control of the eukaryotic cell cycle. In Antirrhinum majus (Garden snapdragon), this protein is Cell division control protein 2 homolog D (CDC2D).